The chain runs to 214 residues: Phosphatidylserine decarboxylase proenzyme (214 aa).

Serine 183 acts as the Schiff-base intermediate with substrate; via pyruvic acid in catalysis. At serine 183 the chain carries Pyruvic acid (Ser); by autocatalysis.

The protein belongs to the phosphatidylserine decarboxylase family. PSD-A subfamily. As to quaternary structure, heterodimer of a large membrane-associated beta subunit and a small pyruvoyl-containing alpha subunit. It depends on pyruvate as a cofactor. In terms of processing, is synthesized initially as an inactive proenzyme. Formation of the active enzyme involves a self-maturation process in which the active site pyruvoyl group is generated from an internal serine residue via an autocatalytic post-translational modification. Two non-identical subunits are generated from the proenzyme in this reaction, and the pyruvate is formed at the N-terminus of the alpha chain, which is derived from the carboxyl end of the proenzyme. The post-translation cleavage follows an unusual pathway, termed non-hydrolytic serinolysis, in which the side chain hydroxyl group of the serine supplies its oxygen atom to form the C-terminus of the beta chain, while the remainder of the serine residue undergoes an oxidative deamination to produce ammonia and the pyruvoyl prosthetic group on the alpha chain.

It is found in the cell membrane. The catalysed reaction is a 1,2-diacyl-sn-glycero-3-phospho-L-serine + H(+) = a 1,2-diacyl-sn-glycero-3-phosphoethanolamine + CO2. It functions in the pathway phospholipid metabolism; phosphatidylethanolamine biosynthesis; phosphatidylethanolamine from CDP-diacylglycerol: step 2/2. Functionally, catalyzes the formation of phosphatidylethanolamine (PtdEtn) from phosphatidylserine (PtdSer). This is Phosphatidylserine decarboxylase proenzyme from Syntrophotalea carbinolica (strain DSM 2380 / NBRC 103641 / GraBd1) (Pelobacter carbinolicus).